Here is a 429-residue protein sequence, read N- to C-terminus: Protein S-Myc (429 aa).

At Tyr36 the chain carries Phosphotyrosine; by Tyr-kinases. The disordered stretch occupies residues 301-325 (PLPYAEDARPLKKPRSQDPLGPLKC). Residues 346–398 (ERRRNHNRMERQRRDIMRSSFLNLRDLVPELVHNEKAAKVVILKKATEYIHTL) form the bHLH domain. The segment at 398–419 (LQTDESKLLVEREKLYERKQQL) is leucine-zipper.

Efficient DNA binding requires dimerization with another bHLH protein.

Its subcellular location is the nucleus. Functionally, has apoptosis-inducing activity. The sequence is that of Protein S-Myc (Mycs) from Rattus norvegicus (Rat).